A 362-amino-acid polypeptide reads, in one-letter code: 3-dehydroquinate synthase (362 aa).

NAD(+) is bound by residues 71–76, 105–109, 129–130, K142, K151, and 169–172; these read DGEQYK, GVIGD, TT, and CLKT. 3 residues coordinate Zn(2+): E184, H247, and H264.

Belongs to the sugar phosphate cyclases superfamily. Dehydroquinate synthase family. Requires Co(2+) as cofactor. The cofactor is Zn(2+). It depends on NAD(+) as a cofactor.

Its subcellular location is the cytoplasm. It catalyses the reaction 7-phospho-2-dehydro-3-deoxy-D-arabino-heptonate = 3-dehydroquinate + phosphate. It functions in the pathway metabolic intermediate biosynthesis; chorismate biosynthesis; chorismate from D-erythrose 4-phosphate and phosphoenolpyruvate: step 2/7. In terms of biological role, catalyzes the conversion of 3-deoxy-D-arabino-heptulosonate 7-phosphate (DAHP) to dehydroquinate (DHQ). This chain is 3-dehydroquinate synthase, found in Salmonella enteritidis PT4 (strain P125109).